Reading from the N-terminus, the 105-residue chain is SH3 domain-binding glutamic acid-rich-like protein 2 (105 aa).

Residues 61 to 67 carry the SH3-binding motif; the sequence is KGNPLPP.

Belongs to the SH3BGR family.

It localises to the nucleus. This Danio rerio (Zebrafish) protein is SH3 domain-binding glutamic acid-rich-like protein 2 (sh3bgrl2).